Here is a 730-residue protein sequence, read N- to C-terminus: Catalase-peroxidase 1 (730 aa).

The interval 1–24 (MQEKGKCPVTGMTKHKTSGGTTNQ) is disordered. Residues 95–218 (WHSAGTYRMG…LAAVQMGLIY (124 aa)) constitute a cross-link (tryptophyl-tyrosyl-methioninium (Trp-Tyr) (with M-244)). The active-site Proton acceptor is histidine 96. Positions 218-244 (YVNPEGPNGQPSALASGKDIRDTFARM) form a cross-link, tryptophyl-tyrosyl-methioninium (Tyr-Met) (with W-95). Histidine 259 contacts heme b.

The protein belongs to the peroxidase family. Peroxidase/catalase subfamily. As to quaternary structure, homodimer or homotetramer. Heme b serves as cofactor. In terms of processing, formation of the three residue Trp-Tyr-Met cross-link is important for the catalase, but not the peroxidase activity of the enzyme.

The catalysed reaction is H2O2 + AH2 = A + 2 H2O. The enzyme catalyses 2 H2O2 = O2 + 2 H2O. Its function is as follows. Bifunctional enzyme with both catalase and broad-spectrum peroxidase activity. This is Catalase-peroxidase 1 from Alkaliphilus metalliredigens (strain QYMF).